The primary structure comprises 342 residues: UDP-N-acetylenolpyruvoylglucosamine reductase (342 aa).

The 171-residue stretch at 13–183 (IDHNAQHIVC…VAVGLRLPKE (171 aa)) folds into the FAD-binding PCMH-type domain. The active site involves Arg-159. Tyr-190 lines the substrate pocket. The Proton donor role is filled by Ser-229. Glu-325 is a catalytic residue.

This sequence belongs to the MurB family. The cofactor is FAD.

It localises to the cytoplasm. The enzyme catalyses UDP-N-acetyl-alpha-D-muramate + NADP(+) = UDP-N-acetyl-3-O-(1-carboxyvinyl)-alpha-D-glucosamine + NADPH + H(+). It participates in cell wall biogenesis; peptidoglycan biosynthesis. Its function is as follows. Cell wall formation. This Escherichia coli O6:H1 (strain CFT073 / ATCC 700928 / UPEC) protein is UDP-N-acetylenolpyruvoylglucosamine reductase.